The primary structure comprises 172 residues: Galectin-related protein (172 aa).

Ala2 carries the post-translational modification N-acetylalanine. A phosphoserine mark is found at Ser22 and Ser25. Residues 39–168 form the Galectin domain; sequence PFCGHIKGGM…TIKINGDLQI (130 aa).

Monomer.

Its function is as follows. Does not bind lactose, and may not bind carbohydrates. The sequence is that of Galectin-related protein (LGALSL) from Homo sapiens (Human).